Consider the following 156-residue polypeptide: Ribosome maturation factor RimP (156 aa).

Belongs to the RimP family.

It is found in the cytoplasm. In terms of biological role, required for maturation of 30S ribosomal subunits. The polypeptide is Ribosome maturation factor RimP (Lysinibacillus sphaericus (strain C3-41)).